The primary structure comprises 1007 residues: Glutamate receptor ionotropic, delta-2 (1007 aa).

The N-terminal stretch at 1-23 is a signal peptide; that stretch reads MEVFPFLLVLSVWWSRTWDSANA. Positions 24 to 345 are interaction with CBLN1 homotrimer; that stretch reads DSIIHIGAIF…NAFHKKLEDR (322 aa). The Extracellular segment spans residues 24-566; sequence DSIIHIGAIF…DMFACLAPFD (543 aa). Intrachain disulfides connect cysteine 83/cysteine 355, cysteine 99/cysteine 131, and cysteine 298/cysteine 310. Asparagine 293 is a glycosylation site (N-linked (GlcNAc...) asparagine). Asparagine 426 carries N-linked (GlcNAc...) asparagine glycosylation. Positions 531, 534, and 535 each coordinate Ca(2+). Residues 567 to 587 traverse the membrane as a helical segment; it reads LSLWACIAGTVLLVGLLVYLL. Over 588–635 the chain is Cytoplasmic; it reads NWLNPPRLQMGSMTSTTLYNSMWFVYGSFVQQGGEVPYTTLATRMMMG. A helical transmembrane segment spans residues 636-656; it reads AWWLFALIVISSYTANLAAFL. The Extracellular portion of the chain corresponds to 657 to 830; it reads TITRIESSIQ…QKGGALDIKS (174 aa). 2 N-linked (GlcNAc...) asparagine glycosylation sites follow: asparagine 713 and asparagine 716. The Ca(2+) site is built by aspartate 753, aspartate 755, and serine 757. A helical membrane pass occupies residues 831 to 851; the sequence is FAGVFCILAAGIVLSCFIAML. Over 852 to 1007 the chain is Cytoplasmic; it reads ETWWNKRKGS…GNDPDRGTSI (156 aa). Serine 883 bears the Phosphoserine mark. Threonine 886 carries the phosphothreonine modification. At serine 890 the chain carries Phosphoserine. Residues 921-991 are interaction with AP4M1; sequence DFRNTHITTT…MSSIPYQPTP (71 aa). The PDZ-binding signature appears at 1005 to 1007; sequence TSI. At serine 1006 the chain carries Phosphoserine.

This sequence belongs to the glutamate-gated ion channel (TC 1.A.10.1) family. GRID2 subfamily. Tetramer; dimer of dimers. Interacts with EML2, MAGI2 (via PDZ domains) and AP4M1. Interacts with BECN1, GOPC, GRID2IP, SHANK1 and SHANK2. Interacts with CBLN2, but not with CBLN4. Interacts with CBLN1 (via C1q domain); the interaction is CBLN1-NRX1 complex formation-dependent; CBLN1-binding is calcium-independent; CBLN1 hexamers anchor GRID2 N-terminal domain dimers to monomeric NRXN1 isoform beta; promotes synaptogenesis and mediates the D-Serine-dependent long term depression signals and AMPA receptor endocytosis.

Its subcellular location is the postsynaptic cell membrane. The enzyme catalyses Ca(2+)(in) = Ca(2+)(out). The catalysed reaction is Na(+)(in) = Na(+)(out). In terms of biological role, member of the ionotropic glutamate receptor family, which plays a crucial role in synaptic organization and signal transduction in the central nervous system. Although it shares structural features with ionotropic glutamate receptors, does not bind glutamate as a primary ligand. Promotes synaptogenesis and mediates the D-Serine-dependent long term depression signals and AMPA receptor endocytosis of cerebellar parallel fiber-Purkinje cell (PF-PC) synapses through the NRX1B-CBLN1-GRID2 triad complex. In the presence of neurexins and cerebellins, forms cation-selective channels that are proposed to be gated by glycine and D-serine. However, recent research disputes this ligand-gated cation channel activity. Cation-selective ion channel activity can be triggered by GRM1 in Purkinje cells. This Homo sapiens (Human) protein is Glutamate receptor ionotropic, delta-2 (GRID2).